A 599-amino-acid polypeptide reads, in one-letter code: Proline dehydrogenase 1, mitochondrial (599 aa).

Disordered regions lie at residues 20 to 39 and 152 to 180; these read STKPQAQEQPPASPEALRGC and EEAERKEMESCTSEAERDGSGANKREKQY. The span at 23 to 39 shows a compositional bias: low complexity; it reads PQAQEQPPASPEALRGC. The span at 153-180 shows a compositional bias: basic and acidic residues; that stretch reads EAERKEMESCTSEAERDGSGANKREKQY. N6-acetyllysine occurs at positions 356, 367, and 485.

Belongs to the proline oxidase family. FAD serves as cofactor. As to expression, expressed in liver, kidney, heart and to a lesser extent in brain, lung and muscle.

The protein localises to the mitochondrion matrix. The enzyme catalyses L-proline + a quinone = (S)-1-pyrroline-5-carboxylate + a quinol + H(+). Its pathway is amino-acid degradation; L-proline degradation into L-glutamate; L-glutamate from L-proline: step 1/2. Converts proline to delta-1-pyrroline-5-carboxylate. The sequence is that of Proline dehydrogenase 1, mitochondrial (Prodh) from Mus musculus (Mouse).